A 157-amino-acid chain; its full sequence is XylDLEGF operon transcriptional activator 2 (157 aa).

In terms of domain architecture, HTH araC/xylS-type spans 39 to 140 (ERVVQFIEEN…GELPSDTLSL (102 aa)). 2 DNA-binding regions (H-T-H motif) span residues 56–77 (EQLA…EKHT) and 107–130 (ITEV…RSTF).

It is found in the cytoplasm. Functionally, regulatory protein of the TOL plasmid xyl operons. XylS activates the xylXYZLTEGFJQKIH operon required for the degradation of toluene, m-xylene and p-xylene. The sequence is that of XylDLEGF operon transcriptional activator 2 (xylS2) from Pseudomonas putida (Arthrobacter siderocapsulatus).